A 453-amino-acid polypeptide reads, in one-letter code: MIQTQSTAIKRRNSVHKNLFDPSLYQIPEPPRGGFQHQKKEYSKETFSNQVFGYDITSLKKRFTQLFPSNIQGYLPEVDLRITIICSIWYVTSSISSNLSKAILRTFNHPIALTELQFLVSAVLCVGFASIVNLFRLPRLKHTKFSKALNSFPDGILPEYLDGNFRSSILHKFLVPSKLVLMTTFPMGIFQFIGHITSHKAVSMIPVSLVHSVKALSPIITVGYYKFFEHRYYNSMTYYTLLLLIFGVMTTCWSTHGSKRASDNKSGSSLIGLLFAFISMIIFVAQNIFAKNILTIRRKVGILPSSSTDDVTSKEGQPSLDKTRFSPLQVDKITILFYCSCIGFSLTLLPFLTGELMHGGSVINDLTLETVALVAIHGIAHFFQAMLAFQLIGLLSSINYSVANIMKRIVVISVALFWETKLNFFQVFGVILTIAGLYGYDKWGLSKKDGRQA.

Residues 1-110 (MIQTQSTAIK…KAILRTFNHP (110 aa)) lie on the Cytoplasmic side of the membrane. Residues 111–131 (IALTELQFLVSAVLCVGFASI) form a helical membrane-spanning segment. Over 132 to 172 (VNLFRLPRLKHTKFSKALNSFPDGILPEYLDGNFRSSILHK) the chain is Lumenal. A helical transmembrane segment spans residues 173–193 (FLVPSKLVLMTTFPMGIFQFI). Topologically, residues 194 to 201 (GHITSHKA) are cytoplasmic. Residues 202–222 (VSMIPVSLVHSVKALSPIITV) form a helical membrane-spanning segment. Residues 223–234 (GYYKFFEHRYYN) lie on the Lumenal side of the membrane. A helical membrane pass occupies residues 235 to 255 (SMTYYTLLLLIFGVMTTCWST). The Cytoplasmic segment spans residues 256–269 (HGSKRASDNKSGSS). Residues 270-290 (LIGLLFAFISMIIFVAQNIFA) traverse the membrane as a helical segment. The Lumenal segment spans residues 291 to 332 (KNILTIRRKVGILPSSSTDDVTSKEGQPSLDKTRFSPLQVDK). A helical membrane pass occupies residues 333 to 353 (ITILFYCSCIGFSLTLLPFLT). The Cytoplasmic portion of the chain corresponds to 354–371 (GELMHGGSVINDLTLETV). The chain crosses the membrane as a helical span at residues 372 to 392 (ALVAIHGIAHFFQAMLAFQLI). Residues 393-413 (GLLSSINYSVANIMKRIVVIS) are Lumenal-facing. A helical membrane pass occupies residues 414–434 (VALFWETKLNFFQVFGVILTI). The Cytoplasmic portion of the chain corresponds to 435–453 (AGLYGYDKWGLSKKDGRQA).

The protein belongs to the TPT transporter family.

It is found in the membrane. Functionally, able to suppress the functional loss of YPT1. May form a channel. Protein SLY41 is not essential for cell viability. The SLY41 gene is a multicopy suppressor. This is an uncharacterized protein from Saccharomyces cerevisiae (strain ATCC 204508 / S288c) (Baker's yeast).